Here is a 103-residue protein sequence, read N- to C-terminus: Co-chaperonin GroES (103 aa).

It belongs to the GroES chaperonin family. Heptamer of 7 subunits arranged in a ring. Interacts with the chaperonin GroEL.

It localises to the cytoplasm. In terms of biological role, together with the chaperonin GroEL, plays an essential role in assisting protein folding. The GroEL-GroES system forms a nano-cage that allows encapsulation of the non-native substrate proteins and provides a physical environment optimized to promote and accelerate protein folding. GroES binds to the apical surface of the GroEL ring, thereby capping the opening of the GroEL channel. The polypeptide is Co-chaperonin GroES (Prochlorococcus marinus (strain MIT 9515)).